The primary structure comprises 365 residues: Histidinol-phosphate aminotransferase (365 aa).

Lys221 bears the N6-(pyridoxal phosphate)lysine mark.

Belongs to the class-II pyridoxal-phosphate-dependent aminotransferase family. Histidinol-phosphate aminotransferase subfamily. Homodimer. Pyridoxal 5'-phosphate serves as cofactor.

The enzyme catalyses L-histidinol phosphate + 2-oxoglutarate = 3-(imidazol-4-yl)-2-oxopropyl phosphate + L-glutamate. The protein operates within amino-acid biosynthesis; L-histidine biosynthesis; L-histidine from 5-phospho-alpha-D-ribose 1-diphosphate: step 7/9. This chain is Histidinol-phosphate aminotransferase, found in Rhodopseudomonas palustris (strain HaA2).